The chain runs to 255 residues: Transmembrane protein 81 (255 aa).

The signal sequence occupies residues M1–A30. Residues I31–S226 lie on the Extracellular side of the membrane. N-linked (GlcNAc...) asparagine glycosylation occurs at N45. In terms of domain architecture, Ig-like spans T83–V171. A disulfide bridge connects residues C104 and C160. A helical transmembrane segment spans residues A227–C247. Over A248–Q255 the chain is Cytoplasmic.

In terms of assembly, forms a complex with IZUMO1 and SPACA6 on spermatocyte cell membrane required for fertilization. Highly expressed in sperm (at protein level).

Its subcellular location is the cell membrane. Essential fertilization factor required for male fertility. Part of a conserved trimeric sperm complex with the essential fertilization factors IZUMO1 and SPACA6 which bridges sperm and oocyte membranes during fertilization by binding to IZUMO1R/JUNO on the oocyte. The sequence is that of Transmembrane protein 81 from Homo sapiens (Human).